Consider the following 190-residue polypeptide: Molybdenum cofactor guanylyltransferase (190 aa).

Residues 8–10 (LAG), Lys20, Asp64, and Asp98 each bind GTP. Residue Asp98 coordinates Mg(2+).

Belongs to the MobA family. As to quaternary structure, monomer. Mg(2+) serves as cofactor.

It is found in the cytoplasm. The catalysed reaction is Mo-molybdopterin + GTP + H(+) = Mo-molybdopterin guanine dinucleotide + diphosphate. In terms of biological role, transfers a GMP moiety from GTP to Mo-molybdopterin (Mo-MPT) cofactor (Moco or molybdenum cofactor) to form Mo-molybdopterin guanine dinucleotide (Mo-MGD) cofactor. In Rhodobacter capsulatus (Rhodopseudomonas capsulata), this protein is Molybdenum cofactor guanylyltransferase.